Consider the following 379-residue polypeptide: Alcohol dehydrogenase class-3 (379 aa).

Position 2 is an N-acetylalanine (A2). Zn(2+) is bound at residue C47. Position 48 (H48) interacts with NAD(+). 2 residues coordinate an alcohol: T49 and H69. Positions 69, 70, 99, 102, 105, 113, and 177 each coordinate Zn(2+). NAD(+) contacts are provided by residues 202-207, D226, K231, I272, 295-297, 320-322, and R372; these read GLGTVG, VGV, and TAF.

This sequence belongs to the zinc-containing alcohol dehydrogenase family. Class-III subfamily. As to quaternary structure, homodimer. Zn(2+) serves as cofactor. As to expression, ubiquitous.

The protein resides in the cytoplasm. It carries out the reaction a primary alcohol + NAD(+) = an aldehyde + NADH + H(+). The enzyme catalyses a secondary alcohol + NAD(+) = a ketone + NADH + H(+). The catalysed reaction is S-(hydroxymethyl)glutathione + NADP(+) = S-formylglutathione + NADPH + H(+). It catalyses the reaction S-(hydroxymethyl)glutathione + NAD(+) = S-formylglutathione + NADH + H(+). It carries out the reaction S-nitrosoglutathione + NADH + H(+) = S-(hydroxysulfenamide)glutathione + NAD(+). Repressed by thiol-modifying agents N-ethylmaleimide (NEM) and 5,5-dithio-bis-(2-nitrobenzoic acid) (DTNB), as well as by methyl methanethiosulfonate (MMTS) in a dose-dependent manner. Inhibited by hydrogen peroxide H(2)O(2). Functionally, alcohol dehydrogenase catalyzing the reduction of nitrosoglutathione. Can also use long-chain alcohols including cinnamyl alcohol and geraniol, and, to a lower extent, octanol. Plays a central role in formaldehyde detoxification. Not able to use ethanol (EtOH) as substrate. The protein is Alcohol dehydrogenase class-3 of Arabidopsis thaliana (Mouse-ear cress).